A 420-amino-acid polypeptide reads, in one-letter code: MVEQDPYEIVIKQLERAAQYMEISEEALEFLKRPQRIVEVTIPVEMDDGSVKVFTGFRVQHNWARGPTKGGIRWHPEETLSTVKALAAWMTWKTAVMDLPYGGGKGGIIVDPKKLSDREKERLARGYIRAIYDVISPYEDIPAPDVYTNPQIMAWMMDEYETISRRKTPAFGIITGKPLSIGGSLGRIEATARGASYTIREAAKVLGWDTLKGKTIAIQGYGNAGYYLAKIMSEDFGMKVVAVSDSKGGIYNPDGLNADEVLKWKNEHGSVKDFPGATNITNEELLELEVDVLAPAAIEEVITKKNADNIKAKIVAEVANGPVTPEADEILFEKGILQIPDFLCNAGGVTVSYFEWVQNITGYYWTIEEVRERLDKKMTKAFYDVYNIAKEKNIHMRDAAYVVAVQRVYQAMLDRGWVKH.

Residue K105 is part of the active site. 220-226 is a binding site for NAD(+); the sequence is GYGNAGY.

Belongs to the Glu/Leu/Phe/Val dehydrogenases family. As to quaternary structure, homohexamer.

It localises to the cytoplasm. It carries out the reaction L-glutamate + NAD(+) + H2O = 2-oxoglutarate + NH4(+) + NADH + H(+). The catalysed reaction is L-glutamate + NADP(+) + H2O = 2-oxoglutarate + NH4(+) + NADPH + H(+). This chain is Glutamate dehydrogenase (gdhA), found in Pyrococcus furiosus (strain ATCC 43587 / DSM 3638 / JCM 8422 / Vc1).